Consider the following 155-residue polypeptide: Ribosomal RNA large subunit methyltransferase H (155 aa).

S-adenosyl-L-methionine-binding positions include Leu73, Gly104, and 123–128 (ISKMTF).

It belongs to the RNA methyltransferase RlmH family. Homodimer.

It is found in the cytoplasm. It carries out the reaction pseudouridine(1915) in 23S rRNA + S-adenosyl-L-methionine = N(3)-methylpseudouridine(1915) in 23S rRNA + S-adenosyl-L-homocysteine + H(+). Functionally, specifically methylates the pseudouridine at position 1915 (m3Psi1915) in 23S rRNA. The polypeptide is Ribosomal RNA large subunit methyltransferase H (Francisella philomiragia subsp. philomiragia (strain ATCC 25017 / CCUG 19701 / FSC 153 / O#319-036)).